We begin with the raw amino-acid sequence, 298 residues long: tRNA dimethylallyltransferase (298 aa).

An ATP-binding site is contributed by 16–23 (GPTASGKS). A substrate-binding site is contributed by 18–23 (TASGKS). Interaction with substrate tRNA regions lie at residues 41–44 (DSMQ) and 165–169 (QRIVR).

This sequence belongs to the IPP transferase family. In terms of assembly, monomer. Requires Mg(2+) as cofactor.

The catalysed reaction is adenosine(37) in tRNA + dimethylallyl diphosphate = N(6)-dimethylallyladenosine(37) in tRNA + diphosphate. Its function is as follows. Catalyzes the transfer of a dimethylallyl group onto the adenine at position 37 in tRNAs that read codons beginning with uridine, leading to the formation of N6-(dimethylallyl)adenosine (i(6)A). The polypeptide is tRNA dimethylallyltransferase (Rhizobium radiobacter (Agrobacterium tumefaciens)).